The following is a 201-amino-acid chain: Small ribosomal subunit protein uS4c (201 aa).

The interval 17-44 (ALPGLTNKKPRTGSDLRNQSRSGKKSQY) is disordered. An S4 RNA-binding domain is found at 89–149 (MRLDNILFRL…DEQKSRALIQ (61 aa)).

Belongs to the universal ribosomal protein uS4 family. Part of the 30S ribosomal subunit. Contacts protein S5. The interaction surface between S4 and S5 is involved in control of translational fidelity.

It localises to the plastid. The protein localises to the chloroplast. Functionally, one of the primary rRNA binding proteins, it binds directly to 16S rRNA where it nucleates assembly of the body of the 30S subunit. Its function is as follows. With S5 and S12 plays an important role in translational accuracy. The polypeptide is Small ribosomal subunit protein uS4c (rps4) (Solanum bulbocastanum (Wild potato)).